The sequence spans 151 residues: Large ribosomal subunit protein uL15 (151 aa).

The tract at residues 1–51 is disordered; the sequence is MKSLRLEDAVPQSGSRHRKLRVGRGHSAGQGKTSGRGMRGQKCRSGGGVRP. Positions 15–24 are enriched in basic residues; it reads SRHRKLRVGR. The span at 26 to 38 shows a compositional bias: gly residues; it reads HSAGQGKTSGRGM.

Belongs to the universal ribosomal protein uL15 family. Part of the 50S ribosomal subunit.

In terms of biological role, binds to the 23S rRNA. This chain is Large ribosomal subunit protein uL15, found in Gloeobacter violaceus (strain ATCC 29082 / PCC 7421).